Consider the following 307-residue polypeptide: UDP-3-O-acyl-N-acetylglucosamine deacetylase (307 aa).

Zn(2+) contacts are provided by His78, His241, and Asp245. The active-site Proton donor is the His268.

This sequence belongs to the LpxC family. Zn(2+) is required as a cofactor.

It catalyses the reaction a UDP-3-O-[(3R)-3-hydroxyacyl]-N-acetyl-alpha-D-glucosamine + H2O = a UDP-3-O-[(3R)-3-hydroxyacyl]-alpha-D-glucosamine + acetate. Its pathway is glycolipid biosynthesis; lipid IV(A) biosynthesis; lipid IV(A) from (3R)-3-hydroxytetradecanoyl-[acyl-carrier-protein] and UDP-N-acetyl-alpha-D-glucosamine: step 2/6. Catalyzes the hydrolysis of UDP-3-O-myristoyl-N-acetylglucosamine to form UDP-3-O-myristoylglucosamine and acetate, the committed step in lipid A biosynthesis. This is UDP-3-O-acyl-N-acetylglucosamine deacetylase from Verminephrobacter eiseniae (strain EF01-2).